Here is a 464-residue protein sequence, read N- to C-terminus: Hydrogen cyanide synthase subunit HcnB (464 aa).

As to quaternary structure, heterotrimer of HcnA, HcnB and HcnC.

It localises to the cell membrane. The catalysed reaction is glycine + 2 A = hydrogen cyanide + 2 AH2 + CO2. Its activity is regulated as follows. Oxygen is necessary for cyanogenesis. Activated by succinate, glycine methyl ester, glucose and D,L-methionine in addition to glycine. Phenazine methosulfate, methylene blue, 2,6-dichlorophenolindophenol (DCIP) and ferricyanide can replace oxygen for the reaction. Inhibited by pyrrolnitrin and acriflavine at 1 mM concentration. A three-component membrane-bound flavoenzyme that catalyzes the formation of hydrogen cyanide, a secondary metabolite, by transfer of electrons to a cyanide-resistant branch of the aerobic respiratory chain. This is Hydrogen cyanide synthase subunit HcnB from Pseudomonas aeruginosa (strain ATCC 15692 / DSM 22644 / CIP 104116 / JCM 14847 / LMG 12228 / 1C / PRS 101 / PAO1).